A 504-amino-acid chain; its full sequence is L-carnitine/gamma-butyrobetaine antiporter (504 aa).

12 consecutive transmembrane segments (helical) span residues 10–30 (IEPK…WLTV), 51–71 (WGWA…WLVF), 92–112 (IFMM…SIEI), 143–163 (GPLP…FFFV), 195–215 (FYLV…TPLV), 231–251 (LDAI…ACGL), 263–283 (SYLS…SFIM), 316–336 (WTVF…IFLA), 347–367 (LCFG…TVLG), 403–423 (LSTA…VTLI), 446–466 (LLVR…LLAL), and 475–495 (AIIA…LSFI).

The protein belongs to the BCCT transporter (TC 2.A.15) family. CaiT subfamily. As to quaternary structure, homotrimer.

The protein resides in the cell inner membrane. It catalyses the reaction 4-(trimethylamino)butanoate(in) + (R)-carnitine(out) = 4-(trimethylamino)butanoate(out) + (R)-carnitine(in). It functions in the pathway amine and polyamine metabolism; carnitine metabolism. Functionally, catalyzes the exchange of L-carnitine for gamma-butyrobetaine. The protein is L-carnitine/gamma-butyrobetaine antiporter of Escherichia fergusonii (strain ATCC 35469 / DSM 13698 / CCUG 18766 / IAM 14443 / JCM 21226 / LMG 7866 / NBRC 102419 / NCTC 12128 / CDC 0568-73).